Consider the following 179-residue polypeptide: NADH-quinone oxidoreductase subunit I (179 aa).

2 4Fe-4S ferredoxin-type domains span residues 49-79 (LTRD…LQKG) and 89-118 (EFFR…LTPD). 8 residues coordinate [4Fe-4S] cluster: C59, C62, C65, C69, C98, C101, C104, and C108.

Belongs to the complex I 23 kDa subunit family. NDH-1 is composed of 14 different subunits. Subunits NuoA, H, J, K, L, M, N constitute the membrane sector of the complex. [4Fe-4S] cluster is required as a cofactor.

Its subcellular location is the cell inner membrane. It catalyses the reaction a quinone + NADH + 5 H(+)(in) = a quinol + NAD(+) + 4 H(+)(out). Functionally, NDH-1 shuttles electrons from NADH, via FMN and iron-sulfur (Fe-S) centers, to quinones in the respiratory chain. The immediate electron acceptor for the enzyme in this species is believed to be ubiquinone. Couples the redox reaction to proton translocation (for every two electrons transferred, four hydrogen ions are translocated across the cytoplasmic membrane), and thus conserves the redox energy in a proton gradient. This chain is NADH-quinone oxidoreductase subunit I, found in Chromohalobacter salexigens (strain ATCC BAA-138 / DSM 3043 / CIP 106854 / NCIMB 13768 / 1H11).